A 92-amino-acid polypeptide reads, in one-letter code: Signal peptidase complex subunit 1 (92 aa).

At 1–12 (MDWQGQKLVEQL) the chain is on the cytoplasmic side. The chain crosses the membrane as a helical span at residues 13–30 (MQILLVISGVVAVVVGYT). Residues 31–36 (TESFRT) are Lumenal-facing. The chain crosses the membrane as a helical span at residues 37–59 (MMLIYAGGVVLTTLVTVPNWPFY). Residues 60 to 92 (NLHPLKWLDPSEAEKHPKPEVVSVASKKKFSKK) lie on the Cytoplasmic side of the membrane. The segment at 73-92 (EKHPKPEVVSVASKKKFSKK) is disordered.

It belongs to the SPCS1 family. As to quaternary structure, component of the signal peptidase complex (SPC) composed of a catalytic subunit SEC11 and three accessory subunits SPCS1, SPCS2 and SPCS3. The complex induces a local thinning of the ER membrane which is used to measure the length of the signal peptide (SP) h-region of protein substrates. This ensures the selectivity of the complex towards h-regions shorter than 18-20 amino acids.

Its subcellular location is the endoplasmic reticulum membrane. Functionally, component of the signal peptidase complex (SPC) which catalyzes the cleavage of N-terminal signal sequences from nascent proteins as they are translocated into the lumen of the endoplasmic reticulum. Dispensable for SPC enzymatic activity. The sequence is that of Signal peptidase complex subunit 1 from Arabidopsis thaliana (Mouse-ear cress).